Here is a 326-residue protein sequence, read N- to C-terminus: N-acetyl-gamma-glutamyl-phosphate reductase (326 aa).

The active site involves C155.

This sequence belongs to the NAGSA dehydrogenase family. Type 1 subfamily.

The protein resides in the cytoplasm. The enzyme catalyses N-acetyl-L-glutamate 5-semialdehyde + phosphate + NADP(+) = N-acetyl-L-glutamyl 5-phosphate + NADPH + H(+). The protein operates within amino-acid biosynthesis; L-arginine biosynthesis; N(2)-acetyl-L-ornithine from L-glutamate: step 3/4. Catalyzes the NADPH-dependent reduction of N-acetyl-5-glutamyl phosphate to yield N-acetyl-L-glutamate 5-semialdehyde. In Shewanella woodyi (strain ATCC 51908 / MS32), this protein is N-acetyl-gamma-glutamyl-phosphate reductase.